The chain runs to 64 residues: Mitotic-spindle organizing protein 1 (64 aa).

It belongs to the MOZART1 family. In terms of assembly, part of the gamma-tubulin complex. Interacts directly with alp6/GPC3.

Its subcellular location is the cytoplasm. The protein localises to the cytoskeleton. It localises to the microtubule organizing center. It is found in the spindle pole body. Its function is as follows. Required for gamma-tubulin complex recruitment to the microtubule organizing center (MTOC). The chain is Mitotic-spindle organizing protein 1 (mzt1) from Schizosaccharomyces pombe (strain 972 / ATCC 24843) (Fission yeast).